The following is a 358-amino-acid chain: Peptide chain release factor 1 (358 aa).

Gln-233 carries the N5-methylglutamine modification. Over residues 282 to 306 (QRAASERSADRRGQVGSGDRSERVR) the composition is skewed to basic and acidic residues. Residues 282–308 (QRAASERSADRRGQVGSGDRSERVRTY) are disordered.

It belongs to the prokaryotic/mitochondrial release factor family. Post-translationally, methylated by PrmC. Methylation increases the termination efficiency of RF1.

The protein resides in the cytoplasm. Peptide chain release factor 1 directs the termination of translation in response to the peptide chain termination codons UAG and UAA. The chain is Peptide chain release factor 1 from Afipia carboxidovorans (strain ATCC 49405 / DSM 1227 / KCTC 32145 / OM5) (Oligotropha carboxidovorans).